The primary structure comprises 51 residues: Zinc metalloproteinase-disintegrin-like crovidisin (51 aa).

The 12-residue stretch at 1 to 12 folds into the Peptidase M12B domain; sequence AMVTKNNGDLDK. The 6-residue stretch at 13–18 folds into the Disintegrin domain; that stretch reads SGTECR. Asn29 is a glycosylation site (N-linked (GlcNAc...) asparagine).

Belongs to the venom metalloproteinase (M12B) family. P-III subfamily. P-IIIa sub-subfamily. Monomer. Requires Zn(2+) as cofactor. As to expression, expressed by the venom gland.

The protein localises to the secreted. In terms of biological role, snake venom zinc metalloproteinase-disintegrin-like that blocks the interaction between platelets and collagen fibers through its binding to collagen fibers, resulting in the blockade of collagen-mediated platelet functions such as adhesion, release reaction, thromboxane formation, and aggregation. Binds selectively to collagen type I with high affinity. Also exerts proteolytic activity to matrix. This Crotalus viridis viridis (Prairie rattlesnake) protein is Zinc metalloproteinase-disintegrin-like crovidisin.